Reading from the N-terminus, the 400-residue chain is Nicotinate phosphoribosyltransferase (400 aa).

The residue at position 220 (histidine 220) is a Phosphohistidine; by autocatalysis.

This sequence belongs to the NAPRTase family. Transiently phosphorylated on a His residue during the reaction cycle. Phosphorylation strongly increases the affinity for substrates and increases the rate of nicotinate D-ribonucleotide production. Dephosphorylation regenerates the low-affinity form of the enzyme, leading to product release.

It catalyses the reaction nicotinate + 5-phospho-alpha-D-ribose 1-diphosphate + ATP + H2O = nicotinate beta-D-ribonucleotide + ADP + phosphate + diphosphate. The protein operates within cofactor biosynthesis; NAD(+) biosynthesis; nicotinate D-ribonucleotide from nicotinate: step 1/1. Its function is as follows. Catalyzes the synthesis of beta-nicotinate D-ribonucleotide from nicotinate and 5-phospho-D-ribose 1-phosphate at the expense of ATP. The protein is Nicotinate phosphoribosyltransferase of Salmonella typhi.